We begin with the raw amino-acid sequence, 310 residues long: Low affinity immunoglobulin gamma Fc region receptor II-b (310 aa).

A signal peptide spans 1-42 (MGILSFLPVLATESDWADCKSPQPWGHMLLWTAVLFLAPVAG). The Extracellular portion of the chain corresponds to 43–217 (TPAAPPKAVL…KPVTITVQAP (175 aa)). Ig-like C2-type domains are found at residues 48–127 (PKAV…VHLT) and 131–213 (EWLV…VTIT). Cystine bridges form between cysteine 71–cysteine 113 and cysteine 152–cysteine 196. N-linked (GlcNAc...) asparagine glycans are attached at residues asparagine 106, asparagine 180, and asparagine 187. The chain crosses the membrane as a helical span at residues 218–240 (SSSPMGIIVAVVTGIAVAAIVAA). At 241–310 (VVALIYCRKK…LEEPDDQNRI (70 aa)) the chain is on the cytoplasmic side. An ITIM motif motif is present at residues 290–295 (ITYSLL). Tyrosine 292 is modified (phosphotyrosine; by SRC-type Tyr-kinases).

In terms of assembly, interacts with INPP5D/SHIP1. Interacts with FGR. Interacts with LYN. As to quaternary structure, (Microbial infection) Isoform IIB1 interacts with measles virus protein N. Protein N is released in the blood following lysis of measles infected cells. This interaction presumably block inflammatory immune response. Phosphorylated by the SRC-type Tyr-kinases LYN and BLK. Is the most broadly distributed Fc-gamma-receptor. Expressed in monocyte, neutrophils, macrophages, basophils, eosinophils, Langerhans cells, B-cells, platelets cells and placenta (endothelial cells). Not detected in natural killer cells.

The protein localises to the cell membrane. Receptor for the Fc region of complexed or aggregated immunoglobulins gamma. Low affinity receptor. Involved in a variety of effector and regulatory functions such as phagocytosis of immune complexes and modulation of antibody production by B-cells. Binding to this receptor results in down-modulation of previous state of cell activation triggered via antigen receptors on B-cells (BCR), T-cells (TCR) or via another Fc receptor. Isoform IIB1 fails to mediate endocytosis or phagocytosis. Isoform IIB2 does not trigger phagocytosis. This is Low affinity immunoglobulin gamma Fc region receptor II-b (FCGR2B) from Homo sapiens (Human).